The primary structure comprises 690 residues: UvrABC system protein C (690 aa).

Residues 15–94 (TDPGVYTFRD…IKRFNPRFNV (80 aa)) form the GIY-YIG domain. Positions 207-242 (EPVLRRVRKEMEQASENLDFERAASLRDQLQAMQKS) constitute a UVR domain.

The protein belongs to the UvrC family. In terms of assembly, interacts with UvrB in an incision complex.

It is found in the cytoplasm. Functionally, the UvrABC repair system catalyzes the recognition and processing of DNA lesions. UvrC both incises the 5' and 3' sides of the lesion. The N-terminal half is responsible for the 3' incision and the C-terminal half is responsible for the 5' incision. The sequence is that of UvrABC system protein C from Corynebacterium jeikeium (strain K411).